Reading from the N-terminus, the 195-residue chain is Pyruvoyl-dependent arginine decarboxylase AaxB (195 aa).

Serine 53 is subject to Pyruvic acid (Ser).

Belongs to the pyruvoyl-dependent arginine decarboxylase family. As to quaternary structure, trimer of an alpha-beta dimer. Pyruvate is required as a cofactor.

The protein localises to the cytoplasm. It catalyses the reaction L-arginine + H(+) = agmatine + CO2. Its function is as follows. Part of the AaxABC system, catalyzes the decarboxylation of L-arginine. The arginine uptake by the bacterium in the macrophage may be a virulence factor against the host innate immune response. The sequence is that of Pyruvoyl-dependent arginine decarboxylase AaxB (aaxB) from Chlamydia trachomatis serovar D (strain ATCC VR-885 / DSM 19411 / UW-3/Cx).